The following is a 95-amino-acid chain: Ferredoxin-like protein FixX (95 aa).

The protein belongs to the bacterial-type ferredoxin family. FixX subfamily.

Its function is as follows. Could be part of an electron transfer system required for anaerobic carnitine reduction. Could be a 3Fe-4S cluster-containing protein. The polypeptide is Ferredoxin-like protein FixX (fixX) (Escherichia coli O157:H7).